The following is a 170-amino-acid chain: Pollen-specific protein C13 (170 aa).

The first 27 residues, 1 to 27, serve as a signal peptide directing secretion; sequence MASVPAPATTTAAVILCLCVVLSCAAA. 3 cysteine pairs are disulfide-bonded: Cys43–Cys114, Cys46–Cys155, and Cys67–Cys102. Asn53 carries an N-linked (GlcNAc...) asparagine glycan.

The protein belongs to the Ole e I family. Pollen.

In Zea mays (Maize), this protein is Pollen-specific protein C13 (MGS1).